Here is a 739-residue protein sequence, read N- to C-terminus: UPF0313 protein YgiQ (739 aa).

Residues 372-650 enclose the Radical SAM core domain; the sequence is AYEMIRFSVN…KALLRYHDPA (279 aa). Residues C386, C390, and C393 each contribute to the [4Fe-4S] cluster site. The disordered stretch occupies residues 686-739; that stretch reads EARRQNRNTRPALTKHTPMATQCQTPATAKKASSTQSRPVNAGAKKRPKAAVGR. Over residues 704-724 the composition is skewed to polar residues; that stretch reads MATQCQTPATAKKASSTQSRP. The span at 729–739 shows a compositional bias: basic residues; it reads AKKRPKAAVGR.

The protein belongs to the UPF0313 family. The cofactor is [4Fe-4S] cluster.

The polypeptide is UPF0313 protein YgiQ (Escherichia coli O157:H7).